The chain runs to 66 residues: Phylloseptin-B1 (66 aa).

A signal peptide spans 1–22; the sequence is MAFLKKSLFLVLFLGLVSLSIC. Positions 23-46 are excised as a propeptide; sequence EEEKRETEEKEYDQGEDDKSEEKR. Leucine 65 carries the post-translational modification Leucine amide.

Belongs to the frog skin active peptide (FSAP) family. Phylloseptin subfamily. In terms of tissue distribution, expressed by the skin glands.

The protein resides in the secreted. The protein localises to the target cell membrane. In terms of biological role, antimicrobial peptide with activity against only a few strains of Gram-positive bacteria (S.aureus and B.megaterium). Acts in a synergistic effect in combination with Plasticin-B1 at doses that are not active alone. The protein is Phylloseptin-B1 of Phyllomedusa bicolor (Two-colored leaf frog).